Consider the following 276-residue polypeptide: NADPH-dependent 7-cyano-7-deazaguanine reductase (276 aa).

83-85 lines the substrate pocket; that stretch reads IES. 85–86 is an NADPH binding site; the sequence is SK. Catalysis depends on C184, which acts as the Thioimide intermediate. D191 acts as the Proton donor in catalysis. 223–224 serves as a coordination point for substrate; the sequence is HE. Residue 252–253 coordinates NADPH; it reads RG.

Belongs to the GTP cyclohydrolase I family. QueF type 2 subfamily. In terms of assembly, homodimer.

The protein localises to the cytoplasm. It carries out the reaction 7-aminomethyl-7-carbaguanine + 2 NADP(+) = 7-cyano-7-deazaguanine + 2 NADPH + 3 H(+). It functions in the pathway tRNA modification; tRNA-queuosine biosynthesis. Catalyzes the NADPH-dependent reduction of 7-cyano-7-deazaguanine (preQ0) to 7-aminomethyl-7-deazaguanine (preQ1). This Pseudomonas aeruginosa (strain LESB58) protein is NADPH-dependent 7-cyano-7-deazaguanine reductase.